Here is a 438-residue protein sequence, read N- to C-terminus: Glutamyl-tRNA reductase (438 aa).

Substrate is bound by residues 49-52, Ser-109, 114-116, and Gln-120; these read TCNR and EGQ. Cys-50 (nucleophile) is an active-site residue. An NADP(+)-binding site is contributed by 198–203; that stretch reads GAGRMS.

The protein belongs to the glutamyl-tRNA reductase family. As to quaternary structure, homodimer.

The enzyme catalyses (S)-4-amino-5-oxopentanoate + tRNA(Glu) + NADP(+) = L-glutamyl-tRNA(Glu) + NADPH + H(+). The protein operates within porphyrin-containing compound metabolism; protoporphyrin-IX biosynthesis; 5-aminolevulinate from L-glutamyl-tRNA(Glu): step 1/2. It participates in porphyrin-containing compound metabolism; chlorophyll biosynthesis. Its function is as follows. Catalyzes the NADPH-dependent reduction of glutamyl-tRNA(Glu) to glutamate 1-semialdehyde (GSA). This is Glutamyl-tRNA reductase from Synechococcus sp. (strain WH7803).